A 247-amino-acid polypeptide reads, in one-letter code: tRNA uridine(34) hydroxylase (247 aa).

A Rhodanese domain is found at 124 to 218 (TKQDVIVIDT…YLEDTQNKNN (95 aa)). Catalysis depends on Cys-178, which acts as the Cysteine persulfide intermediate.

This sequence belongs to the TrhO family.

The enzyme catalyses uridine(34) in tRNA + AH2 + O2 = 5-hydroxyuridine(34) in tRNA + A + H2O. Functionally, catalyzes oxygen-dependent 5-hydroxyuridine (ho5U) modification at position 34 in tRNAs. In Rickettsia massiliae (strain Mtu5), this protein is tRNA uridine(34) hydroxylase.